The sequence spans 278 residues: 4-hydroxy-3-methylbut-2-enyl diphosphate reductase (278 aa).

A [4Fe-4S] cluster-binding site is contributed by Cys12. (2E)-4-hydroxy-3-methylbut-2-enyl diphosphate contacts are provided by His40 and His75. His40 and His75 together coordinate dimethylallyl diphosphate. 2 residues coordinate isopentenyl diphosphate: His40 and His75. Cys97 serves as a coordination point for [4Fe-4S] cluster. A (2E)-4-hydroxy-3-methylbut-2-enyl diphosphate-binding site is contributed by His125. A dimethylallyl diphosphate-binding site is contributed by His125. An isopentenyl diphosphate-binding site is contributed by His125. Glu127 serves as the catalytic Proton donor. Thr157 lines the (2E)-4-hydroxy-3-methylbut-2-enyl diphosphate pocket. A [4Fe-4S] cluster-binding site is contributed by Cys187. Positions 215, 216, 217, and 258 each coordinate (2E)-4-hydroxy-3-methylbut-2-enyl diphosphate. Residues Ser215, Ser216, Asn217, and Ser258 each contribute to the dimethylallyl diphosphate site. Positions 215, 216, 217, and 258 each coordinate isopentenyl diphosphate.

Belongs to the IspH family. [4Fe-4S] cluster serves as cofactor.

It carries out the reaction isopentenyl diphosphate + 2 oxidized [2Fe-2S]-[ferredoxin] + H2O = (2E)-4-hydroxy-3-methylbut-2-enyl diphosphate + 2 reduced [2Fe-2S]-[ferredoxin] + 2 H(+). The enzyme catalyses dimethylallyl diphosphate + 2 oxidized [2Fe-2S]-[ferredoxin] + H2O = (2E)-4-hydroxy-3-methylbut-2-enyl diphosphate + 2 reduced [2Fe-2S]-[ferredoxin] + 2 H(+). Its pathway is isoprenoid biosynthesis; dimethylallyl diphosphate biosynthesis; dimethylallyl diphosphate from (2E)-4-hydroxy-3-methylbutenyl diphosphate: step 1/1. It participates in isoprenoid biosynthesis; isopentenyl diphosphate biosynthesis via DXP pathway; isopentenyl diphosphate from 1-deoxy-D-xylulose 5-phosphate: step 6/6. In terms of biological role, catalyzes the conversion of 1-hydroxy-2-methyl-2-(E)-butenyl 4-diphosphate (HMBPP) into a mixture of isopentenyl diphosphate (IPP) and dimethylallyl diphosphate (DMAPP). Acts in the terminal step of the DOXP/MEP pathway for isoprenoid precursor biosynthesis. The polypeptide is 4-hydroxy-3-methylbut-2-enyl diphosphate reductase (Pseudothermotoga lettingae (strain ATCC BAA-301 / DSM 14385 / NBRC 107922 / TMO) (Thermotoga lettingae)).